Reading from the N-terminus, the 525-residue chain is GMP synthase [glutamine-hydrolyzing] (525 aa).

The region spanning 9 to 207 (RILILDFGSQ…VLDICQCEAL (199 aa)) is the Glutamine amidotransferase type-1 domain. The Nucleophile role is filled by cysteine 86. Catalysis depends on residues histidine 181 and glutamate 183. A GMPS ATP-PPase domain is found at 208 to 400 (WTPATIIEDA…LGLPYDMLFR (193 aa)). 235–241 (SGGVDSS) contacts ATP.

As to quaternary structure, homodimer.

It carries out the reaction XMP + L-glutamine + ATP + H2O = GMP + L-glutamate + AMP + diphosphate + 2 H(+). The protein operates within purine metabolism; GMP biosynthesis; GMP from XMP (L-Gln route): step 1/1. Catalyzes the synthesis of GMP from XMP. The sequence is that of GMP synthase [glutamine-hydrolyzing] from Serratia proteamaculans (strain 568).